The primary structure comprises 377 residues: MVSRRISEIPISKTMELDAKAKALIKKGEDVINLTAGEPDFPTPEPVVEEAVRFLQKGEVKYTDPRGIYELREGIAKRIGERYKKDISPDQVVVTNGAKQALFNAFMALLDPGDEVIVFSPVWVSYIPQIILAGGTVNVVETFMSKNFQPSLEEVEGLLVGKTKAVLINSPNNPTGVVYRREFLEGLVRLAKKRNFYIISDEVYDSLVYTDEFTSILDVSEGFDRIVYINGFSKSHSMTGWRVGYLISSEKVATAVSKIQSHTTSCINTVAQYAALKALEVDNSYMVQTFKERKNFVVERLKKMGVKFVEPEGAFYLFFKVRGDDVKFCERLLEEKKVALVPGSAFLKPGFVRLSFATSIERLTEALDRIEDFLNSR.

3 residues coordinate L-aspartate: G37, W123, and N173. K234 bears the N6-(pyridoxal phosphate)lysine mark. L-aspartate is bound at residue R353.

It belongs to the class-I pyridoxal-phosphate-dependent aminotransferase family. As to quaternary structure, homodimer. It depends on pyridoxal 5'-phosphate as a cofactor.

The protein localises to the cytoplasm. It carries out the reaction L-aspartate + 2-oxoglutarate = oxaloacetate + L-glutamate. In Thermotoga maritima (strain ATCC 43589 / DSM 3109 / JCM 10099 / NBRC 100826 / MSB8), this protein is Aspartate aminotransferase (aspC).